The following is a 149-amino-acid chain: 3-hydroxyacyl-[acyl-carrier-protein] dehydratase FabZ (149 aa).

His-53 is a catalytic residue.

It belongs to the thioester dehydratase family. FabZ subfamily.

The protein localises to the cytoplasm. The enzyme catalyses a (3R)-hydroxyacyl-[ACP] = a (2E)-enoyl-[ACP] + H2O. Functionally, involved in unsaturated fatty acids biosynthesis. Catalyzes the dehydration of short chain beta-hydroxyacyl-ACPs and long chain saturated and unsaturated beta-hydroxyacyl-ACPs. The chain is 3-hydroxyacyl-[acyl-carrier-protein] dehydratase FabZ from Neisseria meningitidis serogroup C / serotype 2a (strain ATCC 700532 / DSM 15464 / FAM18).